A 342-amino-acid polypeptide reads, in one-letter code: Selenide, water dikinase (342 aa).

The active site involves cysteine 13. ATP-binding positions include lysine 16 and 44 to 46 (SCD). Position 47 (aspartate 47) interacts with Mg(2+). Residues aspartate 64, aspartate 87, and 134–136 (GHS) contribute to the ATP site. Aspartate 87 is a binding site for Mg(2+). Aspartate 222 provides a ligand contact to Mg(2+).

Belongs to the selenophosphate synthase 1 family. Class I subfamily. As to quaternary structure, homodimer. It depends on Mg(2+) as a cofactor.

The enzyme catalyses hydrogenselenide + ATP + H2O = selenophosphate + AMP + phosphate + 2 H(+). In terms of biological role, synthesizes selenophosphate from selenide and ATP. The sequence is that of Selenide, water dikinase from Agathobacter rectalis (strain ATCC 33656 / DSM 3377 / JCM 17463 / KCTC 5835 / VPI 0990) (Eubacterium rectale).